The chain runs to 109 residues: Ribonuclease P protein component 2 (109 aa).

It belongs to the eukaryotic/archaeal RNase P protein component 2 family. In terms of assembly, consists of a catalytic RNA component and at least 4-5 protein subunits.

It is found in the cytoplasm. It carries out the reaction Endonucleolytic cleavage of RNA, removing 5'-extranucleotides from tRNA precursor.. In terms of biological role, part of ribonuclease P, a protein complex that generates mature tRNA molecules by cleaving their 5'-ends. This Archaeoglobus fulgidus (strain ATCC 49558 / DSM 4304 / JCM 9628 / NBRC 100126 / VC-16) protein is Ribonuclease P protein component 2.